The following is a 539-amino-acid chain: MQINGITPQALAAYGIHDVRDIVYNPSYELLFKEERSPTLQGYERGIETQLGAVAVDTGIFTGRSPKDKYIVRDDVTRDTVWWSDQGKGKNDNHPLSQETWTHLKELVTTQLSGKRLFIIDAFCGANPDSRLSVRFVTEVAWQAHFVKNMFIRPSDEELEGFEPDFIVMNGAKCTNPNWQEQGLNSENFVAFNLTERIQLIGGTWYGGEMKKGMFSIMNYLLPLKGIASMHCSANVGEKGDVAVFFGLSGTGKTTLSTDPKRQLIGDDEHGWDDDGVFNFEGGCYAKTIKLSKEAEPDIFGAIKRDALLENVTVLADGAVDFNDGSKTENTRVSYPIYHIHNIVKPVSKAGHATKVILLTADAFGVLPPVSRLTSDQTQYHFLSGFTAKLAGTERGVTEPTPTFSACFGAAFLMLHPTQYAEVLVKRMKASGAQAYLVNTGWNGSGKRISIKDTRGIIDAILNGSIDDAEMQTLPVFDLAIPTSLPGVNPDILDPRDTYASIEQWQEKADDLAQRFITNFDKYTDAPAGAALVKAGPKR.

Positions 64, 206, and 212 each coordinate substrate. Residues K212, H231, and 247–255 (GLSGTGKTT) each bind ATP. K212 and H231 together coordinate Mn(2+). Residue D268 coordinates Mn(2+). ATP is bound by residues E296, R332, 448-449 (RI), and T454. Residue R332 participates in substrate binding.

Belongs to the phosphoenolpyruvate carboxykinase (ATP) family. As to quaternary structure, monomer. Mn(2+) serves as cofactor.

The protein resides in the cytoplasm. The enzyme catalyses oxaloacetate + ATP = phosphoenolpyruvate + ADP + CO2. It participates in carbohydrate biosynthesis; gluconeogenesis. Its function is as follows. Involved in the gluconeogenesis. Catalyzes the conversion of oxaloacetate (OAA) to phosphoenolpyruvate (PEP) through direct phosphoryl transfer between the nucleoside triphosphate and OAA. In Pectobacterium atrosepticum (strain SCRI 1043 / ATCC BAA-672) (Erwinia carotovora subsp. atroseptica), this protein is Phosphoenolpyruvate carboxykinase (ATP).